The primary structure comprises 184 residues: MSRIGKRPIPIPAGVQVELTPDNVVRVTGPKGQLELRLHPKMIVQRENGVVQVQRPSDERFFKQLHGLYRTLIANMVQGVTEGFRKDLEIHGVGYRAALEGKTLVLTVGYSHPVRIDPPPGISFIVESPTRIGVVGIDKQLVGEVAAQIRRVRPPEPYQGKGIRYAGEVIRRKAGKTGKTKGKK.

Belongs to the universal ribosomal protein uL6 family. In terms of assembly, part of the 50S ribosomal subunit.

In terms of biological role, this protein binds to the 23S rRNA, and is important in its secondary structure. It is located near the subunit interface in the base of the L7/L12 stalk, and near the tRNA binding site of the peptidyltransferase center. The protein is Large ribosomal subunit protein uL6 of Thermomicrobium roseum (strain ATCC 27502 / DSM 5159 / P-2).